A 275-amino-acid polypeptide reads, in one-letter code: Undecaprenyl-diphosphatase (275 aa).

The next 7 membrane-spanning stretches (helical) occupy residues 8–28 (WTIV…PIPI), 45–65 (ARGL…VLII), 92–112 (FMFV…GVLF), 119–139 (FIGE…AAAI), 197–217 (FSFL…IPNI), 225–245 (ELWI…YFAL), and 255–275 (GNLK…LIFL).

The protein belongs to the UppP family.

The protein resides in the cell membrane. It carries out the reaction di-trans,octa-cis-undecaprenyl diphosphate + H2O = di-trans,octa-cis-undecaprenyl phosphate + phosphate + H(+). In terms of biological role, catalyzes the dephosphorylation of undecaprenyl diphosphate (UPP). Confers resistance to bacitracin. This is Undecaprenyl-diphosphatase from Oceanobacillus iheyensis (strain DSM 14371 / CIP 107618 / JCM 11309 / KCTC 3954 / HTE831).